The chain runs to 244 residues: Serine-rich single-pass membrane protein 1 (244 aa).

The chain crosses the membrane as a helical span at residues 35 to 55 (CGTIGNFLLWYFVIVFVLMFF). 3 disordered regions span residues 65–112 (DKKD…LTPV), 132–191 (QSQF…LGSY), and 213–244 (HSQQ…FSKF). The span at 80 to 94 (ASKETSYKWQSKDGA) shows a compositional bias: basic and acidic residues. Composition is skewed to polar residues over residues 97–112 (PSQT…LTPV) and 132–142 (QSQFNEVNQNQ). The span at 161–176 (SWKESESEHHPSPDSI) shows a compositional bias: basic and acidic residues. Residues 231-244 (ESSISDINTKFSKF) show a composition bias toward polar residues.

Its subcellular location is the membrane. This chain is Serine-rich single-pass membrane protein 1 (SSMEM1), found in Macaca fascicularis (Crab-eating macaque).